An 815-amino-acid chain; its full sequence is Leucine--tRNA ligase (815 aa).

The 'HIGH' region motif lies at 42–52; the sequence is PYPSGRLHMGH. Positions 574 to 578 match the 'KMSKS' region motif; the sequence is KMSKS. Position 577 (Lys577) interacts with ATP.

The protein belongs to the class-I aminoacyl-tRNA synthetase family.

The protein localises to the cytoplasm. The catalysed reaction is tRNA(Leu) + L-leucine + ATP = L-leucyl-tRNA(Leu) + AMP + diphosphate. This Marinomonas sp. (strain MWYL1) protein is Leucine--tRNA ligase.